A 341-amino-acid chain; its full sequence is HTH-type sugar sensing transcriptional regulator TrmBL1 (341 aa).

Residues 32 to 53 constitute a DNA-binding region (H-T-H motif); that stretch reads SKATDVTKESGIPHTRIYDVLS.

The protein belongs to the transcriptional regulator TrmB family. In terms of assembly, homotetramer. Forms homooctamers in the presence of maltotriose or maltose.

Repressor activity is regulated by binding of different sugars to TrmBL1. Binding of maltose and maltotriose results in derepression of the target genes. However, high sugar concentration results in formation of octamers with high affinity for DNA, which may prevent transcription of target genes. Functionally, global transcriptional repressor of the maltodextrin transport gene cluster (mdxE operon) and most likely of all genes encoding glycolytic enzymes. Acts by binding to the conserved TGM (Thermococcales-Glycolytic-Motif) sequences in their promoter region. Can also interact with non-TGM sequences. In Pyrococcus furiosus (strain ATCC 43587 / DSM 3638 / JCM 8422 / Vc1), this protein is HTH-type sugar sensing transcriptional regulator TrmBL1 (trmBL1).